Consider the following 730-residue polypeptide: Envelope glycoprotein H (730 aa).

The signal sequence occupies residues 1–21 (MQGLAFLAALACWRCISLTCG). Over 22-706 (ATGALPTTAT…MYRRRAASAL (685 aa)) the chain is Virion surface. Residues Asn-46, Asn-54, Asn-101, Asn-125, Asn-131, Asn-188, Asn-209, Asn-215, Asn-267, Asn-274, Asn-365, Asn-556, Asn-613, Asn-626, and Asn-688 are each glycosylated (N-linked (GlcNAc...) asparagine; by host). The interaction with gL stretch occupies residues 190-254 (SGVALYGVVS…RNAKYALVAI (65 aa)). The helical transmembrane segment at 707–727 (FLILSFIGFSGVIYFLYRLFS) threads the bilayer. The Intravirion segment spans residues 728-730 (ILY).

The protein belongs to the herpesviridae glycoprotein H family. As to quaternary structure, interacts with glycoprotein L (gL); this interaction is necessary for the correct processing and cell surface expression of gH. The heterodimer gH/gL seems to interact with gB trimers during fusion. When in complex with gL, interacts with host EPHA2; this interaction triggers EPHA2 phosphorylation and endocytosis allowing KSHV entry. In terms of processing, N-glycosylated, O-glycosylated, and sialylated.

Its subcellular location is the virion membrane. It is found in the host cell membrane. The protein resides in the host endosome membrane. Functionally, the heterodimer glycoprotein H-glycoprotein L is required for the fusion of viral and plasma membranes leading to virus entry into the host cell. Following initial binding to host receptor, membrane fusion is mediated by the fusion machinery composed of gB and the heterodimer gH/gL. May also be involved in the fusion between the virion envelope and the outer nuclear membrane during virion morphogenesis. Targets host EPHA2 to promote KSHV entry. This chain is Envelope glycoprotein H, found in Homo sapiens (Human).